The following is a 335-amino-acid chain: Lipoyl synthase (335 aa).

Residues 1-13 (MTIDTNPESSTPS) are compositionally biased toward polar residues. A disordered region spans residues 1 to 29 (MTIDTNPESSTPSAPAYNPSEKQKGSAKT). Positions 75, 80, 86, 101, 105, 108, and 315 each coordinate [4Fe-4S] cluster. One can recognise a Radical SAM core domain in the interval 86-304 (CFGKGTATFM…EEEAYKMGFA (219 aa)).

This sequence belongs to the radical SAM superfamily. Lipoyl synthase family. [4Fe-4S] cluster serves as cofactor.

It localises to the cytoplasm. The enzyme catalyses [[Fe-S] cluster scaffold protein carrying a second [4Fe-4S](2+) cluster] + N(6)-octanoyl-L-lysyl-[protein] + 2 oxidized [2Fe-2S]-[ferredoxin] + 2 S-adenosyl-L-methionine + 4 H(+) = [[Fe-S] cluster scaffold protein] + N(6)-[(R)-dihydrolipoyl]-L-lysyl-[protein] + 4 Fe(3+) + 2 hydrogen sulfide + 2 5'-deoxyadenosine + 2 L-methionine + 2 reduced [2Fe-2S]-[ferredoxin]. Its pathway is protein modification; protein lipoylation via endogenous pathway; protein N(6)-(lipoyl)lysine from octanoyl-[acyl-carrier-protein]: step 2/2. In terms of biological role, catalyzes the radical-mediated insertion of two sulfur atoms into the C-6 and C-8 positions of the octanoyl moiety bound to the lipoyl domains of lipoate-dependent enzymes, thereby converting the octanoylated domains into lipoylated derivatives. The sequence is that of Lipoyl synthase from Herminiimonas arsenicoxydans.